The primary structure comprises 252 residues: Membrane protein insertase YidC (252 aa).

A signal peptide spans 1 to 19; it reads MKKVLWIIIIILMVGALAG. The N-palmitoyl cysteine moiety is linked to residue Cys-20. Cys-20 is lipidated: S-diacylglycerol cysteine. A run of 6 helical transmembrane segments spans residues 34 to 54, 58 to 78, 131 to 151, 162 to 182, 201 to 221, and 223 to 243; these read IWNHFFVYPLSWVLISVADLL, FGLSIIVVTIGIRLFLLPLMI, MAGCLPLFIQLPVMMAFYFAI, FLWFDLGSPDPLYILPVVAGI, VIIYIMPVMIVVAGVTLPSAL, and LYWVVGNLFMIIQTYFTVVRF.

This sequence belongs to the OXA1/ALB3/YidC family. Type 2 subfamily.

It is found in the cell membrane. Required for the insertion and/or proper folding and/or complex formation of integral membrane proteins into the membrane. Involved in integration of membrane proteins that insert both dependently and independently of the Sec translocase complex, as well as at least some lipoproteins. This is Membrane protein insertase YidC from Alkalihalophilus pseudofirmus (strain ATCC BAA-2126 / JCM 17055 / OF4) (Bacillus pseudofirmus).